The following is a 217-amino-acid chain: Probable transaldolase (217 aa).

Residue K83 is the Schiff-base intermediate with substrate of the active site.

This sequence belongs to the transaldolase family. Type 3B subfamily.

It localises to the cytoplasm. It carries out the reaction D-sedoheptulose 7-phosphate + D-glyceraldehyde 3-phosphate = D-erythrose 4-phosphate + beta-D-fructose 6-phosphate. The protein operates within carbohydrate degradation; pentose phosphate pathway; D-glyceraldehyde 3-phosphate and beta-D-fructose 6-phosphate from D-ribose 5-phosphate and D-xylulose 5-phosphate (non-oxidative stage): step 2/3. Its function is as follows. Transaldolase is important for the balance of metabolites in the pentose-phosphate pathway. The chain is Probable transaldolase from Clostridium botulinum (strain Okra / Type B1).